We begin with the raw amino-acid sequence, 107 residues long: Small ribosomal subunit protein uS10 (107 aa).

It belongs to the universal ribosomal protein uS10 family. Part of the 30S ribosomal subunit.

Functionally, involved in the binding of tRNA to the ribosomes. This is Small ribosomal subunit protein uS10 from Deinococcus geothermalis (strain DSM 11300 / CIP 105573 / AG-3a).